Consider the following 341-residue polypeptide: Anthranilate phosphoribosyltransferase (341 aa).

5-phospho-alpha-D-ribose 1-diphosphate is bound by residues glycine 82, 85 to 86, threonine 90, 92 to 95, 110 to 118, and threonine 122; these read GD, NIST, and KHGNRAITS. Glycine 82 contributes to the anthranilate binding site. Serine 94 is a Mg(2+) binding site. Asparagine 113 is a binding site for anthranilate. An anthranilate-binding site is contributed by arginine 168. Mg(2+) is bound by residues aspartate 226 and glutamate 227.

This sequence belongs to the anthranilate phosphoribosyltransferase family. As to quaternary structure, homodimer. Mg(2+) is required as a cofactor.

The catalysed reaction is N-(5-phospho-beta-D-ribosyl)anthranilate + diphosphate = 5-phospho-alpha-D-ribose 1-diphosphate + anthranilate. The protein operates within amino-acid biosynthesis; L-tryptophan biosynthesis; L-tryptophan from chorismate: step 2/5. Its function is as follows. Catalyzes the transfer of the phosphoribosyl group of 5-phosphorylribose-1-pyrophosphate (PRPP) to anthranilate to yield N-(5'-phosphoribosyl)-anthranilate (PRA). This chain is Anthranilate phosphoribosyltransferase, found in Caulobacter vibrioides (strain ATCC 19089 / CIP 103742 / CB 15) (Caulobacter crescentus).